A 60-amino-acid polypeptide reads, in one-letter code: MAQIKITLTKSPIGRIPSQRKTVVALGLGKLNSFVIKEDNAAIRGMITAVSHLVTVEEVN.

This sequence belongs to the universal ribosomal protein uL30 family. Part of the 50S ribosomal subunit.

This Streptococcus pneumoniae (strain Hungary19A-6) protein is Large ribosomal subunit protein uL30.